The following is a 157-amino-acid chain: Large ribosomal subunit protein eL24 (157 aa).

The disordered stretch occupies residues 94–157 (RNQKPEVRKA…ISAPRVGGKR (64 aa)). Basic and acidic residues predominate over residues 96–117 (QKPEVRKAQREQAIRAAKEAKK). Residues 123–140 (KKPAAPSAKASTKTAQKP) show a composition bias toward low complexity.

It belongs to the eukaryotic ribosomal protein eL24 family. Component of the large ribosomal subunit.

Its subcellular location is the cytoplasm. Component of the large ribosomal subunit. The ribosome is a large ribonucleoprotein complex responsible for the synthesis of proteins in the cell. The chain is Large ribosomal subunit protein eL24 (rpl24) from Pagrus major (Red sea bream).